A 205-amino-acid polypeptide reads, in one-letter code: Glycerol-3-phosphate acyltransferase (205 aa).

Transmembrane regions (helical) follow at residues 4–24, 56–76, 81–101, 112–132, and 138–158; these read IAPG…AILV, VAVL…AYAL, FWLG…VFFG, FGAI…TWLL, and GYSS…VWWF.

It belongs to the PlsY family. Probably interacts with PlsX.

The protein resides in the cell inner membrane. It carries out the reaction an acyl phosphate + sn-glycerol 3-phosphate = a 1-acyl-sn-glycero-3-phosphate + phosphate. It functions in the pathway lipid metabolism; phospholipid metabolism. Catalyzes the transfer of an acyl group from acyl-phosphate (acyl-PO(4)) to glycerol-3-phosphate (G3P) to form lysophosphatidic acid (LPA). This enzyme utilizes acyl-phosphate as fatty acyl donor, but not acyl-CoA or acyl-ACP. This is Glycerol-3-phosphate acyltransferase from Citrobacter koseri (strain ATCC BAA-895 / CDC 4225-83 / SGSC4696).